The sequence spans 589 residues: MNNRKEDMEITSHYRHLLRELNEQRQHGVLCDVCVVVEGKVFKAHKNVLLGSSRYFKTLYCQVQKTSEQATVTHLDIVTAQGFKAIIDFMYSAHLALTSRNVIEVMSAASFLQMTDIVQACHDFIKAALDISIKSDASDELAEFEIGASSSSSTEALISAVMAGRSISPWLARRTSPANSSGDSAIASCHDGGSSYGKEDQEPKADGPDDVSSQPLWPGDVGYGPLRIKEEQVSPSQYGGSELPSAKDGAVQNSFSEQSAGDAWQPTGRRKNRKNKETVRHITQQVEDDSRASSPVPSFLPTSGWPFSSRDSNADLSVTEASSSDSRGERAELYAQVEEGLLGGEASYLGPPLTPEKDDALHQATAVANLRAALMSKNSLLSLKADVLGDDGSLLFEYLPRGAHSLSLNEFTVIRKKFKCPYCSFSAMHQCILKRHMRSHTGERPYPCEICGKKFTRREHMKRHTLVHSKDKKYVCKVCSRVFMSAASVGIRHGSRRHGVCTDCAGRGMAGPLDHGGGGGEGSPEALFPGDGPYLEDPEDPRGEAEELGEDDEGLAPEDALLADDKDEEDSPRPRSPPGGPDKDFAWLS.

Residues 31–99 (CDVCVVVEGK…MYSAHLALTS (69 aa)) enclose the BTB domain. A disordered region spans residues 173–330 (RRTSPANSSG…ASSSDSRGER (158 aa)). A compositionally biased stretch (basic and acidic residues) spans 197 to 207 (GKEDQEPKADG). A Glycyl lysine isopeptide (Lys-Gly) (interchain with G-Cter in SUMO2) cross-link involves residue lysine 229. Serine 234 carries the post-translational modification Phosphoserine. The segment covering 305–325 (WPFSSRDSNADLSVTEASSSD) has biased composition (polar residues). 2 C2H2-type zinc fingers span residues 418–436 (FKCP…LKRH) and 446–468 (YPCE…TLVH). Residues 512-589 (PLDHGGGGGE…GPDKDFAWLS (78 aa)) form a disordered region. A compositionally biased stretch (acidic residues) spans 546 to 570 (EELGEDDEGLAPEDALLADDKDEED).

Sumoylated. Desumoylation by DESI1 reverses transcriptional repression activity.

It is found in the nucleus. Functions as a transcriptional repressor for PRDM1. This chain is Zinc finger and BTB domain-containing protein 46 (ZBTB46), found in Homo sapiens (Human).